The sequence spans 376 residues: UPF0754 membrane protein SSP0953 (376 aa).

2 consecutive transmembrane segments (helical) span residues 4 to 24 (FLVI…TNVI) and 356 to 376 (FLGF…AIFV).

The protein belongs to the UPF0754 family.

It localises to the cell membrane. The sequence is that of UPF0754 membrane protein SSP0953 from Staphylococcus saprophyticus subsp. saprophyticus (strain ATCC 15305 / DSM 20229 / NCIMB 8711 / NCTC 7292 / S-41).